We begin with the raw amino-acid sequence, 468 residues long: 6-phospho-beta-galactosidase (468 aa).

5 residues coordinate D-galactose 6-phosphate: Gln-19, His-116, Asn-159, Glu-160, and Asn-297. Residue Glu-160 is the Proton donor of the active site. Catalysis depends on Glu-375, which acts as the Nucleophile. Ser-428, Trp-429, Lys-435, and Tyr-437 together coordinate D-galactose 6-phosphate.

Belongs to the glycosyl hydrolase 1 family.

It carries out the reaction a 6-phospho-beta-D-galactoside + H2O = D-galactose 6-phosphate + an alcohol. It participates in carbohydrate metabolism; lactose degradation; D-galactose 6-phosphate and beta-D-glucose from lactose 6-phosphate: step 1/1. This Lactococcus lactis subsp. lactis (Streptococcus lactis) protein is 6-phospho-beta-galactosidase.